The chain runs to 154 residues: 6,7-dimethyl-8-ribityllumazine synthase (154 aa).

Residues F26, 60 to 62 (ALE), and 84 to 86 (CII) each bind 5-amino-6-(D-ribitylamino)uracil. Position 89–90 (89–90 (ET)) interacts with (2S)-2-hydroxy-3-oxobutyl phosphate. The active-site Proton donor is the H92. N117 contacts 5-amino-6-(D-ribitylamino)uracil. R131 lines the (2S)-2-hydroxy-3-oxobutyl phosphate pocket.

Belongs to the DMRL synthase family.

It catalyses the reaction (2S)-2-hydroxy-3-oxobutyl phosphate + 5-amino-6-(D-ribitylamino)uracil = 6,7-dimethyl-8-(1-D-ribityl)lumazine + phosphate + 2 H2O + H(+). Its pathway is cofactor biosynthesis; riboflavin biosynthesis; riboflavin from 2-hydroxy-3-oxobutyl phosphate and 5-amino-6-(D-ribitylamino)uracil: step 1/2. Catalyzes the formation of 6,7-dimethyl-8-ribityllumazine by condensation of 5-amino-6-(D-ribitylamino)uracil with 3,4-dihydroxy-2-butanone 4-phosphate. This is the penultimate step in the biosynthesis of riboflavin. The polypeptide is 6,7-dimethyl-8-ribityllumazine synthase (Polaromonas sp. (strain JS666 / ATCC BAA-500)).